The sequence spans 238 residues: Ribonuclease PH (238 aa).

Residues Arg86 and 124–126 contribute to the phosphate site; that span reads GTR.

Belongs to the RNase PH family. As to quaternary structure, homohexameric ring arranged as a trimer of dimers.

It carries out the reaction tRNA(n+1) + phosphate = tRNA(n) + a ribonucleoside 5'-diphosphate. In terms of biological role, phosphorolytic 3'-5' exoribonuclease that plays an important role in tRNA 3'-end maturation. Removes nucleotide residues following the 3'-CCA terminus of tRNAs; can also add nucleotides to the ends of RNA molecules by using nucleoside diphosphates as substrates, but this may not be physiologically important. Probably plays a role in initiation of 16S rRNA degradation (leading to ribosome degradation) during starvation. This chain is Ribonuclease PH, found in Histophilus somni (strain 129Pt) (Haemophilus somnus).